Reading from the N-terminus, the 267-residue chain is Tryptophan synthase alpha chain (267 aa).

Catalysis depends on proton acceptor residues Glu49 and Asp60.

This sequence belongs to the TrpA family. As to quaternary structure, tetramer of two alpha and two beta chains.

It carries out the reaction (1S,2R)-1-C-(indol-3-yl)glycerol 3-phosphate + L-serine = D-glyceraldehyde 3-phosphate + L-tryptophan + H2O. It participates in amino-acid biosynthesis; L-tryptophan biosynthesis; L-tryptophan from chorismate: step 5/5. Its function is as follows. The alpha subunit is responsible for the aldol cleavage of indoleglycerol phosphate to indole and glyceraldehyde 3-phosphate. The protein is Tryptophan synthase alpha chain of Solibacter usitatus (strain Ellin6076).